The primary structure comprises 391 residues: Autotransporter heptosyltransferase Aah (391 aa).

Positions 101, 102, and 103 each coordinate ADP-D-glycero-beta-D-manno-heptose. The active-site Proton acceptor is D104. 7 residues coordinate ADP-D-glycero-beta-D-manno-heptose: Q218, T220, K224, R251, L275, G296, and E320. Fe(3+)-binding residues include C333, C336, C352, and C364.

The protein belongs to the glycosyltransferase 9 family. In terms of assembly, homododecamer composed of 6 homodimers forming a ring. The cofactor is Fe(3+).

The protein resides in the cytoplasm. It carries out the reaction ADP-D-glycero-beta-D-manno-heptose + L-seryl-[protein] = O-(D-glycero-alpha-D-manno-heptosyl)-L-seryl-[protein] + ADP + H(+). It catalyses the reaction ADP-L-glycero-beta-D-manno-heptose + L-seryl-[protein] = O-(L-glycero-alpha-D-manno-heptosyl)-L-seryl-[protein] + ADP + H(+). In terms of biological role, glycosylates autotransporter AIDA-I. Catalyzes the addition of both L, D-heptose and D, D-heptose sugars. Probably by glycosylating AIDA-I, involved in bacteria adhesion to host mammalian cells. The polypeptide is Autotransporter heptosyltransferase Aah (Escherichia coli).